Consider the following 470-residue polypeptide: UDP-glycosyltransferase 72D1 (470 aa).

UDP-alpha-D-glucose contacts are provided by residues serine 276, alanine 343–glutamine 345, histidine 360–glutamate 368, and tyrosine 382–glutamine 385.

Belongs to the UDP-glycosyltransferase family.

This Arabidopsis thaliana (Mouse-ear cress) protein is UDP-glycosyltransferase 72D1 (UGT72D1).